The following is a 74-amino-acid chain: Large ribosomal subunit protein uL29 (74 aa).

Belongs to the universal ribosomal protein uL29 family.

This is Large ribosomal subunit protein uL29 (rpmC) from Streptomyces coelicolor (strain ATCC BAA-471 / A3(2) / M145).